Here is a 330-residue protein sequence, read N- to C-terminus: Ketol-acid reductoisomerase (NADP(+)) (330 aa).

The KARI N-terminal Rossmann domain maps to 2 to 182 (ARMYYDEDAN…GGTRAGVLET (181 aa)). NADP(+)-binding positions include 25–28 (YGSQ), S51, S53, and 83–86 (DEVQ). H108 is an active-site residue. Residue G134 participates in NADP(+) binding. The KARI C-terminal knotted domain maps to 183–328 (TFREETETDL…QDLRAMMSWL (146 aa)). Mg(2+) is bound by residues D191, E195, E227, and E231. Residue S252 coordinates substrate.

It belongs to the ketol-acid reductoisomerase family. Mg(2+) serves as cofactor.

The enzyme catalyses (2R)-2,3-dihydroxy-3-methylbutanoate + NADP(+) = (2S)-2-acetolactate + NADPH + H(+). The catalysed reaction is (2R,3R)-2,3-dihydroxy-3-methylpentanoate + NADP(+) = (S)-2-ethyl-2-hydroxy-3-oxobutanoate + NADPH + H(+). The protein operates within amino-acid biosynthesis; L-isoleucine biosynthesis; L-isoleucine from 2-oxobutanoate: step 2/4. Its pathway is amino-acid biosynthesis; L-valine biosynthesis; L-valine from pyruvate: step 2/4. Functionally, involved in the biosynthesis of branched-chain amino acids (BCAA). Catalyzes an alkyl-migration followed by a ketol-acid reduction of (S)-2-acetolactate (S2AL) to yield (R)-2,3-dihydroxy-isovalerate. In the isomerase reaction, S2AL is rearranged via a Mg-dependent methyl migration to produce 3-hydroxy-3-methyl-2-ketobutyrate (HMKB). In the reductase reaction, this 2-ketoacid undergoes a metal-dependent reduction by NADPH to yield (R)-2,3-dihydroxy-isovalerate. The chain is Ketol-acid reductoisomerase (NADP(+)) from Microcystis aeruginosa (strain NIES-843 / IAM M-2473).